Consider the following 300-residue polypeptide: CDP-diacylglycerol--serine O-phosphatidyltransferase (300 aa).

The next 6 membrane-spanning stretches (helical) occupy residues A10–T30, I74–T94, M95–L115, E135–L155, G162–I182, and L207–L227.

Belongs to the CDP-alcohol phosphatidyltransferase class-I family.

The protein resides in the cell membrane. The enzyme catalyses a CDP-1,2-diacyl-sn-glycerol + L-serine = a 1,2-diacyl-sn-glycero-3-phospho-L-serine + CMP + H(+). The sequence is that of CDP-diacylglycerol--serine O-phosphatidyltransferase (pssA) from Mycobacterium leprae (strain TN).